We begin with the raw amino-acid sequence, 335 residues long: Methyltransferase pgmE (335 aa).

This sequence belongs to the methyltransferase superfamily.

It participates in pigment biosynthesis. Its pathway is secondary metabolite biosynthesis. Functionally, methyltransferase; part of the gene cluster that mediates the biosynthesis of pleosporalin A, ascomycone A, as well as a third cryptic naphthoquinone derived pigment, all responsible for the coloration of conidia. Essential for the production of pleosporalin A, but not the 2 other final products. The pathway begins with the biosynthesis of the cyclized heptaketide 3-acetonyl-1,6,8-trihydroxy-2-naphthaldehyde by the NR-PKS pgmA. The C-6 hydroxyl group is further methylated by the O-methyltransferase pgmB to yield fusarubinaldehyde which is in turn oxidized by the cytochrome P450 monooxygenase pgmC at C-9. The C-1 hydroxyl group is then methylated spontaneously. Although pgmE, pgmD and pgmH are essential for the production of pleosporalin A, it is not the case for the 2 other final products and it remains difficult to assign a specific function to each enzyme. PgmF and pgmG seem not to be involved in pigment biosynthesis although they were regulated by the cluster-specific transcription factor pgmR. The protein is Methyltransferase pgmE of Aspergillus terreus.